We begin with the raw amino-acid sequence, 52 residues long: Mating pheromone En-1 (52 aa).

4 disulfide bridges follow: C11/C37, C23/C33, C30/C52, and C34/C46.

It localises to the secreted. Functionally, mating ciliate pheromones (or gamones) are diffusible extracellular communication signals that distinguish different intraspecific classes of cells commonly referred to as 'mating types'. They prepare the latter for conjugation by changing their cell surface properties. The chain is Mating pheromone En-1 from Euplotes nobilii (Ciliate).